Here is a 267-residue protein sequence, read N- to C-terminus: Thiamine pyrophosphokinase 2 (267 aa).

It belongs to the thiamine pyrophosphokinase family.

The protein localises to the cytoplasm. It localises to the cytosol. The enzyme catalyses thiamine + ATP = thiamine diphosphate + AMP + H(+). The protein operates within cofactor biosynthesis; thiamine diphosphate biosynthesis; thiamine diphosphate from thiamine: step 1/1. Its function is as follows. Catalyzes the phosphorylation of thiamine to thiamine pyrophosphate (TPP). TPP is an active cofactor for enzymes involved in glycolysis and energy production. Plant leaves require high levels of TPP for photosynthesis and carbohydrate metabolism. The sequence is that of Thiamine pyrophosphokinase 2 (TPK2) from Oryza sativa subsp. japonica (Rice).